The sequence spans 319 residues: Malate dehydrogenase (319 aa).

NAD(+) contacts are provided by residues G10–G15 and D34. Substrate contacts are provided by R83 and R89. Residues N96 and I119–N121 each bind NAD(+). The substrate site is built by N121 and R152. H176 functions as the Proton acceptor in the catalytic mechanism.

It belongs to the LDH/MDH superfamily. MDH type 3 family.

The enzyme catalyses (S)-malate + NAD(+) = oxaloacetate + NADH + H(+). Catalyzes the reversible oxidation of malate to oxaloacetate. This Francisella novicida protein is Malate dehydrogenase.